A 248-amino-acid polypeptide reads, in one-letter code: Putative TrmH family tRNA/rRNA methyltransferase (248 aa).

Residues glycine 196, isoleucine 216, and leucine 225 each coordinate S-adenosyl-L-methionine.

This sequence belongs to the class IV-like SAM-binding methyltransferase superfamily. RNA methyltransferase TrmH family.

The protein is Putative TrmH family tRNA/rRNA methyltransferase of Staphylococcus aureus (strain Mu50 / ATCC 700699).